The sequence spans 37 residues: Large ribosomal subunit protein bL36 (37 aa).

The protein belongs to the bacterial ribosomal protein bL36 family.

The protein is Large ribosomal subunit protein bL36 of Thioalkalivibrio sulfidiphilus (strain HL-EbGR7).